The primary structure comprises 256 residues: Acetylglutamate kinase (256 aa).

Substrate is bound by residues 40-41 (GG), arginine 62, and asparagine 154.

Belongs to the acetylglutamate kinase family. ArgB subfamily.

The protein localises to the cytoplasm. The enzyme catalyses N-acetyl-L-glutamate + ATP = N-acetyl-L-glutamyl 5-phosphate + ADP. The protein operates within amino-acid biosynthesis; L-arginine biosynthesis; N(2)-acetyl-L-ornithine from L-glutamate: step 2/4. Catalyzes the ATP-dependent phosphorylation of N-acetyl-L-glutamate. This chain is Acetylglutamate kinase, found in Staphylococcus aureus (strain MRSA252).